Reading from the N-terminus, the 70-residue chain is DNA gyrase inhibitor YacG (70 aa).

Basic and acidic residues predominate over residues 1 to 15; that stretch reads MPEDKKAAAKVEPLR. Residues 1–22 are disordered; that stretch reads MPEDKKAAAKVEPLRKTRPCPE. Zn(2+) contacts are provided by Cys-20, Cys-23, Cys-35, and Cys-39.

The protein belongs to the DNA gyrase inhibitor YacG family. Interacts with GyrB. Zn(2+) serves as cofactor.

Inhibits all the catalytic activities of DNA gyrase by preventing its interaction with DNA. Acts by binding directly to the C-terminal domain of GyrB, which probably disrupts DNA binding by the gyrase. The polypeptide is DNA gyrase inhibitor YacG (Rhizobium johnstonii (strain DSM 114642 / LMG 32736 / 3841) (Rhizobium leguminosarum bv. viciae)).